The chain runs to 399 residues: CCA-adding enzyme (399 aa).

Residues Gly-28 and Arg-31 each coordinate ATP. Residues Gly-28 and Arg-31 each coordinate CTP. The Mg(2+) site is built by Asp-41 and Asp-43. ATP contacts are provided by Arg-112, Asp-155, Arg-158, Arg-161, and Arg-164. CTP-binding residues include Arg-112, Asp-155, Arg-158, Arg-161, and Arg-164.

Belongs to the tRNA nucleotidyltransferase/poly(A) polymerase family. Bacterial CCA-adding enzyme type 3 subfamily. As to quaternary structure, homodimer. Requires Mg(2+) as cofactor.

The enzyme catalyses a tRNA precursor + 2 CTP + ATP = a tRNA with a 3' CCA end + 3 diphosphate. It catalyses the reaction a tRNA with a 3' CCA end + 2 CTP + ATP = a tRNA with a 3' CCACCA end + 3 diphosphate. Catalyzes the addition and repair of the essential 3'-terminal CCA sequence in tRNAs without using a nucleic acid template. Adds these three nucleotides in the order of C, C, and A to the tRNA nucleotide-73, using CTP and ATP as substrates and producing inorganic pyrophosphate. tRNA 3'-terminal CCA addition is required both for tRNA processing and repair. Also involved in tRNA surveillance by mediating tandem CCA addition to generate a CCACCA at the 3' terminus of unstable tRNAs. While stable tRNAs receive only 3'-terminal CCA, unstable tRNAs are marked with CCACCA and rapidly degraded. The sequence is that of CCA-adding enzyme from Staphylococcus saprophyticus subsp. saprophyticus (strain ATCC 15305 / DSM 20229 / NCIMB 8711 / NCTC 7292 / S-41).